Consider the following 721-residue polypeptide: Ribonucleoside-diphosphate reductase subunit alpha (721 aa).

Substrate contacts are provided by residues T159, 175 to 176 (SC), G204, 384 to 388 (NLCSE), and 589 to 593 (PTGSI). C176 and C413 are joined by a disulfide. Residue N384 is the Proton acceptor of the active site. Residue C386 is the Cysteine radical intermediate of the active site. E388 acts as the Proton acceptor in catalysis.

This sequence belongs to the ribonucleoside diphosphate reductase large chain family. Tetramer of two alpha and two beta subunits.

It carries out the reaction a 2'-deoxyribonucleoside 5'-diphosphate + [thioredoxin]-disulfide + H2O = a ribonucleoside 5'-diphosphate + [thioredoxin]-dithiol. With respect to regulation, under complex allosteric control mediated by deoxynucleoside triphosphates and ATP binding. The type of nucleotide bound at the specificity site determines substrate preference. It seems probable that ATP makes the enzyme reduce CDP and UDP, dGTP favors ADP reduction and dTTP favors GDP reduction. In terms of biological role, provides the precursors necessary for DNA synthesis. Catalyzes the biosynthesis of deoxyribonucleotides from the corresponding ribonucleotides. This Mycoplasma pneumoniae (strain ATCC 29342 / M129 / Subtype 1) (Mycoplasmoides pneumoniae) protein is Ribonucleoside-diphosphate reductase subunit alpha (nrdE).